We begin with the raw amino-acid sequence, 401 residues long: Imidazolonepropionase (401 aa).

Positions 66 and 68 each coordinate Fe(3+). Zn(2+)-binding residues include His-66 and His-68. 4-imidazolone-5-propanoate is bound by residues Arg-75, Tyr-138, and His-171. N-formimidoyl-L-glutamate is bound at residue Tyr-138. Fe(3+) is bound at residue His-236. His-236 provides a ligand contact to Zn(2+). A 4-imidazolone-5-propanoate-binding site is contributed by Gln-239. Asp-311 serves as a coordination point for Fe(3+). Asp-311 contributes to the Zn(2+) binding site. N-formimidoyl-L-glutamate-binding residues include Asn-313 and Gly-315. Thr-316 contacts 4-imidazolone-5-propanoate.

The protein belongs to the metallo-dependent hydrolases superfamily. HutI family. Zn(2+) is required as a cofactor. Fe(3+) serves as cofactor.

It localises to the cytoplasm. It carries out the reaction 4-imidazolone-5-propanoate + H2O = N-formimidoyl-L-glutamate. It functions in the pathway amino-acid degradation; L-histidine degradation into L-glutamate; N-formimidoyl-L-glutamate from L-histidine: step 3/3. Catalyzes the hydrolytic cleavage of the carbon-nitrogen bond in imidazolone-5-propanoate to yield N-formimidoyl-L-glutamate. It is the third step in the universal histidine degradation pathway. This Pseudomonas fluorescens (strain ATCC BAA-477 / NRRL B-23932 / Pf-5) protein is Imidazolonepropionase.